Reading from the N-terminus, the 377-residue chain is Adaptive-response sensory kinase SasA (377 aa).

Residues 154-373 (MLVHDLRSPL…SFHFTLPVYR (220 aa)) form the Histidine kinase domain. His157 carries the post-translational modification Phosphohistidine; by autocatalysis.

As to quaternary structure, homooligomerizes. Interacts with KaiC. Participates in the KaiABC clock complex, whose core is composed of a KaiC homohexamer, 6 KaiB and up to 6 KaiA dimers. SasA and KaiB(fs) compete to bind to KaiC.

It carries out the reaction ATP + protein L-histidine = ADP + protein N-phospho-L-histidine.. In terms of biological role, member of the two-component regulatory system SasA/RpaA involved in genome-wide circadian gene expression. One of several clock output pathways. Participates in the Kai clock protein complex, the main circadian regulator in cyanobacteria, via its interaction with KaiC. KaiC enhances the autophosphorylation activity of SasA, which then transfers its phosphate group to RpaA to activate it. In addition to its output function, recruits fold-shifted KaiB (KaiB(fs)) to KaiC to cooperatively form the KaiB(6):KaiC(6) complex (independent of SasA kinase activity). Required for robustness of the circadian rhythm of gene expression and is involved in clock output, also required for adaptation to light/dark cycles. The protein is Adaptive-response sensory kinase SasA of Synechococcus sp. (strain JA-2-3B'a(2-13)) (Cyanobacteria bacterium Yellowstone B-Prime).